A 412-amino-acid chain; its full sequence is Probable histone-binding protein rba-1 (412 aa).

WD repeat units follow at residues 117–157 (NHPG…SEPK), 169–209 (GHEG…TISG), 219–259 (GHSS…PQLT), 262–302 (GHTA…KKMY), 306–346 (HHND…DPSS), and 365–405 (GHTG…VSSE).

The protein belongs to the WD repeat RBAP46/RBAP48/MSI1 family. As to quaternary structure, binds directly to helix 1 of the histone fold of histone H4, a region that is not accessible when H4 is in chromatin. Interacts with zft-11; the interaction is required to suppress the activation of non-neuronal genes in neurons.

The protein resides in the nucleus. Core histone-binding subunit that may target chromatin assembly factors, chromatin remodeling factors and histone deacetylases to their histone substrates in a manner that is regulated by nucleosomal DNA. Plays a role in regulating cell cycle progression. Required to repress the induction of vulval development by Ras signaling. In association with the zinc finger protein ztf-11, negatively regulates the expression of non-neuronal genes during neurogenesis. The chain is Probable histone-binding protein rba-1 from Caenorhabditis elegans.